Here is a 203-residue protein sequence, read N- to C-terminus: Reticulon-like protein B12 (203 aa).

The Reticulon domain occupies 24 to 203 (VADVMLWRKK…WANPENKKLS (180 aa)). A run of 3 helical transmembrane segments spans residues 34–54 (NVSV…EAFA), 55–75 (YTIF…LFLW), and 132–152 (VAVS…QTLC).

Its subcellular location is the endoplasmic reticulum membrane. This chain is Reticulon-like protein B12 (RTNLB12), found in Arabidopsis thaliana (Mouse-ear cress).